The following is a 342-amino-acid chain: Olfactory receptor 51F2 (342 aa).

The Extracellular segment spans residues Met-1–Tyr-39. Asn-17 carries N-linked (GlcNAc...) asparagine glycosylation. A helical membrane pass occupies residues Trp-40 to Leu-60. The Cytoplasmic segment spans residues Phe-61–Ser-68. The helical transmembrane segment at Leu-69–Leu-89 threads the bilayer. At Cys-90–Ala-113 the chain is on the extracellular side. A disulfide bridge links Cys-111 with Cys-203. Residues Gln-114–Phe-134 traverse the membrane as a helical segment. Over Asp-135–Ala-153 the chain is Cytoplasmic. The chain crosses the membrane as a helical span at residues Arg-154 to Met-174. Residues Leu-175–Ser-210 lie on the Extracellular side of the membrane. The helical transmembrane segment at Ile-211 to Ser-231 threads the bilayer. Residues Tyr-232–Ala-251 are Cytoplasmic-facing. Residues Phe-252 to Leu-272 form a helical membrane-spanning segment. The Extracellular portion of the chain corresponds to Ser-273–His-287. Residues Ile-288–Val-308 form a helical membrane-spanning segment. Topologically, residues Lys-309–Glu-342 are cytoplasmic.

It belongs to the G-protein coupled receptor 1 family.

It localises to the cell membrane. In terms of biological role, odorant receptor. The chain is Olfactory receptor 51F2 (OR51F2) from Homo sapiens (Human).